The primary structure comprises 211 residues: ATP phosphoribosyltransferase (211 aa).

This sequence belongs to the ATP phosphoribosyltransferase family. Short subfamily. As to quaternary structure, heteromultimer composed of HisG and HisZ subunits.

It localises to the cytoplasm. The catalysed reaction is 1-(5-phospho-beta-D-ribosyl)-ATP + diphosphate = 5-phospho-alpha-D-ribose 1-diphosphate + ATP. Its pathway is amino-acid biosynthesis; L-histidine biosynthesis; L-histidine from 5-phospho-alpha-D-ribose 1-diphosphate: step 1/9. Catalyzes the condensation of ATP and 5-phosphoribose 1-diphosphate to form N'-(5'-phosphoribosyl)-ATP (PR-ATP). Has a crucial role in the pathway because the rate of histidine biosynthesis seems to be controlled primarily by regulation of HisG enzymatic activity. This is ATP phosphoribosyltransferase from Rippkaea orientalis (strain PCC 8801 / RF-1) (Cyanothece sp. (strain PCC 8801)).